The sequence spans 873 residues: DNA mismatch repair protein MutS (873 aa).

ATP is bound at residue 601 to 608 (GPNMSGKS).

It belongs to the DNA mismatch repair MutS family.

In terms of biological role, this protein is involved in the repair of mismatches in DNA. It is possible that it carries out the mismatch recognition step. This protein has a weak ATPase activity. The polypeptide is DNA mismatch repair protein MutS (Staphylococcus epidermidis (strain ATCC 12228 / FDA PCI 1200)).